The chain runs to 412 residues: Type II methyltransferase M.Sau3AI (412 aa).

The SAM-dependent MTase C5-type domain occupies 4-402 (IKVVELFAGV…NQIEKIDSIT (399 aa)). C85 is an active-site residue.

This sequence belongs to the class I-like SAM-binding methyltransferase superfamily. C5-methyltransferase family.

The enzyme catalyses a 2'-deoxycytidine in DNA + S-adenosyl-L-methionine = a 5-methyl-2'-deoxycytidine in DNA + S-adenosyl-L-homocysteine + H(+). Its function is as follows. A methylase that recognizes the double-stranded sequence 5'-GATC-3', methylates C-4 on both strands and protects the DNA from cleavage by the Sau3AI endonuclease. The sequence is that of Type II methyltransferase M.Sau3AI (sau3AIM) from Staphylococcus aureus.